The following is a 665-amino-acid chain: Putative phospholipid:diacylglycerol acyltransferase 2 (665 aa).

Residues 48–68 (LIGYLCTAWWLLLFLYHSVPV) form a helical membrane-spanning segment. The active-site Acyl-ester intermediate is the serine 237. Active-site charge relay system residues include aspartate 567 and histidine 620.

It belongs to the AB hydrolase superfamily. Lipase family.

It localises to the membrane. The catalysed reaction is a glycerophospholipid + a 1,2-diacyl-sn-glycerol = a monoacylglycerophospholipid + a triacyl-sn-glycerol. This chain is Putative phospholipid:diacylglycerol acyltransferase 2 (PDAT2), found in Arabidopsis thaliana (Mouse-ear cress).